We begin with the raw amino-acid sequence, 134 residues long: Ribosome-binding factor A (134 aa).

It belongs to the RbfA family. Monomer. Binds 30S ribosomal subunits, but not 50S ribosomal subunits or 70S ribosomes.

It localises to the cytoplasm. Functionally, one of several proteins that assist in the late maturation steps of the functional core of the 30S ribosomal subunit. Associates with free 30S ribosomal subunits (but not with 30S subunits that are part of 70S ribosomes or polysomes). Required for efficient processing of 16S rRNA. May interact with the 5'-terminal helix region of 16S rRNA. This Rhizobium leguminosarum bv. trifolii (strain WSM2304) protein is Ribosome-binding factor A.